A 70-amino-acid chain; its full sequence is Alpha-conotoxin EIIB (70 aa).

An N-terminal signal peptide occupies residues 1 to 21 (MGMRMMFIVFLLVVLATTVVS). A propeptide spanning residues 22-51 (FTLDHVLGLASEGRNAKAIDNALDQRDPKR) is cleaved from the precursor. A Pyrrolidone carboxylic acid modification is found at Gln-52. Pro-54 carries the post-translational modification Hydroxyproline. 2 disulfides stabilise this stretch: Cys-56-Cys-62 and Cys-57-Cys-67. Residue Cys-67 is modified to Cysteine amide.

As to expression, expressed by the venom duct.

Its subcellular location is the secreted. Alpha-conotoxins bind to the nicotinic acetylcholine receptors (nAChR) and inhibit them. This peptide potently blocks muscular nicotinic acetylcholine receptor (CHRNA1-CHRNB1-CHRNG-CHRND), and has no effect on neuronal receptors. It is able to totally displace [125I]-Bgtx from the Torpedo receptor with an inhibition constant (Ki) of 2.2 and 0.7 nM. In Conus ermineus (Agate cone), this protein is Alpha-conotoxin EIIB.